The sequence spans 268 residues: Embryonic abundant protein VF30.1 (268 aa).

A signal peptide spans 1-25 (MEFAHLTVLSLFCLAFVGITATSSG). One can recognise a BURP domain in the interval 68-259 (LFFEHDLHPG…GNKAAAWVPN (192 aa)). N-linked (GlcNAc...) asparagine glycosylation is present at asparagine 259.

Seed.

The protein resides in the secreted. This is Embryonic abundant protein VF30.1 from Vicia faba (Broad bean).